The primary structure comprises 343 residues: Probable 4-hydroxy-tetrahydrodipicolinate reductase 1, chloroplastic (343 aa).

The N-terminal 14 residues, 1–14 (MLASTFATHPAAAA), are a transit peptide targeting the chloroplast. NAD(+) is bound by residues 167–169 (GTT) and 190–193 (SPQM). Catalysis depends on His226, which acts as the Proton donor/acceptor. Lys230 acts as the Proton donor in catalysis. 235 to 236 (GT) serves as a coordination point for (S)-2,3,4,5-tetrahydrodipicolinate.

It belongs to the DapB family.

Its subcellular location is the plastid. The protein localises to the chloroplast. It carries out the reaction (S)-2,3,4,5-tetrahydrodipicolinate + NAD(+) + H2O = (2S,4S)-4-hydroxy-2,3,4,5-tetrahydrodipicolinate + NADH + H(+). The enzyme catalyses (S)-2,3,4,5-tetrahydrodipicolinate + NADP(+) + H2O = (2S,4S)-4-hydroxy-2,3,4,5-tetrahydrodipicolinate + NADPH + H(+). Its pathway is amino-acid biosynthesis; L-lysine biosynthesis via DAP pathway; (S)-tetrahydrodipicolinate from L-aspartate: step 4/4. Its function is as follows. Catalyzes the conversion of 4-hydroxy-tetrahydrodipicolinate (HTPA) to tetrahydrodipicolinate. In Oryza sativa subsp. japonica (Rice), this protein is Probable 4-hydroxy-tetrahydrodipicolinate reductase 1, chloroplastic (DAPB1).